The chain runs to 484 residues: mRNA decay activator protein ZFP36L2 (484 aa).

Ser57 and Ser127 each carry phosphoserine. The segment at 100 to 152 (YGQLKEPSGGSGTALVTKESKFRDRSFSENGERSQHLLHLQQQQKGGSGSQIN) is disordered. The segment covering 117 to 134 (KESKFRDRSFSENGERSQ) has biased composition (basic and acidic residues). The short motif at 155-160 (RYKTEL) is the RNA-binding element. C3H1-type zinc fingers lie at residues 155–183 (RYKTELCRPFEESGTCKYGEKCQFAHGFH) and 193–221 (KYKTELCRTFHTIGFCPYGPRCHFIHNAD). The tract at residues 172–213 (YGEKCQFAHGFHELRSLTRHPKYKTELCRTFHTIGFCPYGPR) is RNA-binding. Disordered regions lie at residues 261 to 304 (SLSF…SCSS) and 395 to 484 (QQGL…ISDD). Pro residues predominate over residues 401 to 418 (PAPPPAQPPAAPAPPSPP). A compositionally biased stretch (low complexity) spans 449 to 468 (YLSGSLSSGSLSGSESPSLD). 2 positions are modified to phosphoserine; by RPS6KA1: Ser480 and Ser482.

Associates with the cytoplasmic CCR4-NOT deadenylase to trigger ARE-containing mRNA deadenylation and decay processes. Interacts with CNOT7; this interaction is inhibited in response to phorbol 12-myristate 13-acetate (PMA) treatment in a p38 MAPK-dependent manner. Interacts with CNOT6L. Post-translationally, phosphorylated by RPS6KA1 at Ser-480 and Ser-482 upon phorbol 12-myristate 13-acetate (PMA) treatment; this phosphorylation results in dissociation of the CCR4-NOT-deadenylase complex and induces p38 MAPK-mediated stabilization of the low-density lipoprotein (LDL) receptor (LDLR) mRNA. Phosphorylation occurs during early preadipocyte differentiation. In terms of tissue distribution, expressed in preadipocytes and adipocytes (at protein level). Expressed at highest level in lymphoid tissues such as thymus, spleen, lung, uterus, ovary, small and large intestine, mammary gland, fat and bone marrow. Expressed at intermediate level in kidney, heart, adrenal, eye and fetal liver. Weakly expressed in brain, skeletal muscle and liver. Expressed through B lymphocyte development. Expressed in superior cervical ganglion (SCG) and dorsal root ganglion (DRG). Expressed in embryonic stem cells (ESCs). Expressed in oocytes.

It is found in the nucleus. It localises to the cytoplasm. Zinc-finger RNA-binding protein that destabilizes several cytoplasmic AU-rich element (ARE)-containing mRNA transcripts by promoting their poly(A) tail removal or deadenylation, and hence provide a mechanism for attenuating protein synthesis. Acts as a 3'-untranslated region (UTR) ARE mRNA-binding adapter protein to communicate signaling events to the mRNA decay machinery. Functions by recruiting the CCR4-NOT deadenylase complex and probably other components of the cytoplasmic RNA decay machinery to the bound ARE-containing mRNAs, and hence promotes ARE-mediated mRNA deadenylation and decay processes. Binds to 3'-UTR ARE of numerous mRNAs. Promotes ARE-containing mRNA decay of the low-density lipoprotein (LDL) receptor (LDLR) mRNA in response to phorbol 12-myristate 13-acetate (PMA) treatment in a p38 MAPK-dependent manner. Positively regulates early adipogenesis by promoting ARE-mediated mRNA decay of immediate early genes (IEGs). Plays a role in mature peripheral neuron integrity by promoting ARE-containing mRNA decay of the transcriptional repressor REST mRNA. Plays a role in ovulation and oocyte meiotic maturation by promoting ARE-mediated mRNA decay of the luteinizing hormone receptor LHCGR mRNA. Acts as a negative regulator of erythroid cell differentiation: promotes glucocorticoid-induced self-renewal of erythroid cells by binding mRNAs that are induced or highly expressed during terminal erythroid differentiation and promotes their degradation, preventing erythroid cell differentiation. In association with ZFP36L1 maintains quiescence on developing B lymphocytes by promoting ARE-mediated decay of several mRNAs encoding cell cycle regulators that help B cells progress through the cell cycle, and hence ensuring accurate variable-diversity-joining (VDJ) recombination process and functional immune cell formation. Together with ZFP36L1 is also necessary for thymocyte development and prevention of T-cell acute lymphoblastic leukemia (T-ALL) transformation by promoting ARE-mediated mRNA decay of the oncogenic transcription factor NOTCH1 mRNA. This chain is mRNA decay activator protein ZFP36L2, found in Mus musculus (Mouse).